We begin with the raw amino-acid sequence, 487 residues long: Cytochrome P450 monooxygenase pyvB (487 aa).

Residues 17–37 (PAYSSVVIGALVVCLVCLVWP) traverse the membrane as a helical segment. Residue Cys-426 coordinates heme.

Belongs to the cytochrome P450 family. Heme is required as a cofactor.

It localises to the membrane. It functions in the pathway secondary metabolite biosynthesis. Its function is as follows. Cytochrome P450 monooxygenase; part of the gene cluster that mediates the biosynthesis of pyranoviolin A, a pyranonigrin analog with a C-3 methoxy group. Initially, the PKS portion of pyvA synthesizes C-10 carbon chain from 5 molecules of malonyl-CoA, which is then condensed with the thiolation (T) domain-bound glycine activated by the adenylation (A) domain. The subsequent chain release by Dieckmann condensation (DKC) could be catalyzed by the TE domain present at the C-terminus of pyvA and/or the alpha/beta hydrolase pyvD, installing the tetramic acid moiety. The FAD-dependent monooxygenase pyvC next epoxidizes one of the olefins of the polyketide part, and the epoxide ring-opening induces the dihydro-gamma-pyrone ring formation. The cytochrome P450 monooxygeanse pyvB would be responsible for the 2 consecutive reactions, in which the dihydro-gamma-pyrone is oxidized to gamma-pyrone and C-7 is hydroxylated to yield pyranonigrin F. Finally, the O-methyltransferase pyvH methylates the C-3 hydroxy group to complete the biosynthesis. This chain is Cytochrome P450 monooxygenase pyvB, found in Aspergillus violaceofuscus (strain CBS 115571).